The primary structure comprises 344 residues: Mycothiol acetyltransferase (344 aa).

Residue glutamate 36 coordinates 1D-myo-inositol 2-(L-cysteinylamino)-2-deoxy-alpha-D-glucopyranoside. N-acetyltransferase domains are found at residues 40 to 179 and 187 to 344; these read LALR…TPLP and VTVR…PSTG. The tract at residues 61-83 is disordered; that stretch reads ADTSGPNVPDTPGDQNAADTSTM. Positions 73–83 are enriched in polar residues; sequence GDQNAADTSTM. Acetyl-CoA is bound at residue 109-111; that stretch reads VVV. Residues glutamate 214, lysine 253, and glutamate 272 each contribute to the 1D-myo-inositol 2-(L-cysteinylamino)-2-deoxy-alpha-D-glucopyranoside site. Acetyl-CoA contacts are provided by residues 276-278 and 283-289; these read VGV and GGAGLGR. 1D-myo-inositol 2-(L-cysteinylamino)-2-deoxy-alpha-D-glucopyranoside is bound at residue tyrosine 310. Position 315-320 (315-320) interacts with acetyl-CoA; the sequence is NVRAVR.

Belongs to the acetyltransferase family. MshD subfamily. As to quaternary structure, monomer.

The enzyme catalyses 1D-myo-inositol 2-(L-cysteinylamino)-2-deoxy-alpha-D-glucopyranoside + acetyl-CoA = mycothiol + CoA + H(+). Catalyzes the transfer of acetyl from acetyl-CoA to desacetylmycothiol (Cys-GlcN-Ins) to form mycothiol. The chain is Mycothiol acetyltransferase from Frankia casuarinae (strain DSM 45818 / CECT 9043 / HFP020203 / CcI3).